A 261-amino-acid chain; its full sequence is MLPISYTNLNSSRITRDGTASSASRYRRLIPEYFRRIFHYPQMDIEYTFWIMFYLCFNPSRVYRVTSWHKQTKNQWARDDPAFAVILVFFMAIASMSYAITFHFLSFLNVIKVMFWAVFVDFITVGLLIATIGWWVTNKFLRVSVHNHSVDQSVEWLYAFDIHCNSFFPLFIILYVVQFFLLPILLSNSLFAAILSNTLYIIGFSYYYYVTFLGYNALPFLQHTVVFLYPIGILFALYIVSVVMGKNLTVSIINFYFGFQL.

6 consecutive transmembrane segments (helical) span residues 37-57 (IFHY…YLCF), 82-102 (AFAV…AITF), 113-133 (VMFW…ATIG), 166-186 (SFFP…PILL), 190-210 (LFAA…YYYV), and 225-245 (VVFL…VVMG).

Belongs to the unc-50 family.

Its subcellular location is the membrane. The sequence is that of Protein unc-50 homolog from Dictyostelium discoideum (Social amoeba).